Here is a 317-residue protein sequence, read N- to C-terminus: Bile salt hydrolase/transferase (317 aa).

Cys-2 serves as the catalytic Nucleophile; acyl-thioester intermediate. Residues Cys-2 and Arg-18 each coordinate deoxycholate. Asn-82 lines the taurine pocket.

Belongs to the peptidase C59 family. Homotetramer. The tetramer consists of a dimer of dimers.

It catalyses the reaction glycocholate + H2O = cholate + glycine. It carries out the reaction glycodeoxycholate + H2O = deoxycholate + glycine. The enzyme catalyses chenodeoxycholate + glycine = glycochenodeoxycholate + H2O. The catalysed reaction is cholate + taurine = taurocholate + H2O. It catalyses the reaction taurodeoxycholate + H2O = deoxycholate + taurine. It carries out the reaction taurochenodeoxycholate + H2O = chenodeoxycholate + taurine. The enzyme catalyses an L-alpha-amino acid + cholate = an N-choloyl-L-alpha-amino acid + H2O. The catalysed reaction is an L-alpha-amino acid + taurocholate = an N-choloyl-L-alpha-amino acid + taurine. It catalyses the reaction cholate + L-alanine = L-alanocholate + H2O. It carries out the reaction taurocholate + L-alanine = L-alanocholate + taurine. The enzyme catalyses cholate + L-serine = L-serocholate + H2O. The catalysed reaction is taurocholate + L-serine = L-serocholate + taurine. It catalyses the reaction cholate + L-histidine = L-histidocholate + H2O. It carries out the reaction taurocholate + L-histidine = L-histidocholate + taurine. Its pathway is lipid metabolism; bile acid biosynthesis. Possesses dual functions in bile acid metabolism. Acts as a bile salt hydrolase that catalyzes the deconjugation of glycine- and taurine-linked bile salts, which occurs naturally in the intestines of humans, releasing amino acid residues and deconjugated bile salts (bile acids). Can hydrolyze the amide bond in all six major human conjugated bile salts, namely glycocholate (GCA), glycodeoxycholate (GDCA), glycochenodeoxycholate (GCDCA), taurocholate (TCA), taurodeoxycholate (TDCA) and taurochenodeoxycholate (TCDCA). Shows a slight preference for glycine-conjugated bile acids as substrates. Also acts as an amine N-acyltransferase that conjugates a wide variety of amino acids to conjugated and non-conjugated bile acids, thus producing bacterial bile acid amidates (BBAAs) - also named microbially conjugated bile acids (MCBAs) - in the gastrointestinal tract. These BBAAs may facilitate communication between the microbiota and host through the activation of human ligand-activated transcription factors. In Bifidobacterium longum subsp. longum (strain ATCC 15707 / DSM 20219 / JCM 1217 / NCTC 11818 / E194b), this protein is Bile salt hydrolase/transferase.